The chain runs to 320 residues: Probable carboxylesterase M8 (320 aa).

The Involved in the stabilization of the negatively charged intermediate by the formation of the oxyanion hole signature appears at 52 to 54 (HGG). Catalysis depends on residues Ser137 and His296.

Belongs to the 'GDXG' lipolytic enzyme family.

It catalyses the reaction a carboxylic ester + H2O = an alcohol + a carboxylate + H(+). It functions in the pathway secondary metabolite biosynthesis. Its function is as follows. Probable carboxylesterase; part of the gene cluster that mediates the biosynthesis of squalestatin S1 (SQS1, also known as zaragozic acid A), a heavily oxidized fungal polyketide that offers potent cholesterol lowering activity by targeting squalene synthase (SS). SQS1 is composed of a 2,8-dioxobicyclic[3.2.1]octane-3,4,5-tricarboxyclic acid core that is connected to two lipophilic polyketide arms. These initial steps feature the priming of an unusual benzoic acid starter unit onto the highly reducing polyketide synthase pks2, followed by oxaloacetate extension and product release to generate a tricarboxylic acid containing product. The phenylalanine ammonia lyase (PAL) M7 and the acyl-CoA ligase M9 are involved in transforming phenylalanine into benzoyl-CoA. The citrate synthase-like protein R3 is involved in connecting the C-alpha-carbons of the hexaketide chain and oxaloacetate to afford the tricarboxylic acid unit. The potential hydrolytic enzymes, M8 and M10, are in close proximity to pks2 and may participate in product release. On the other side, the tetraketide arm is synthesized by a the squalestatin tetraketide synthase pks1 and enzymatically esterified to the core in the last biosynthetic step, by the acetyltransferase M4. The biosynthesis of the tetraketide must involve 3 rounds of chain extension. After the first and second rounds methyl-transfer occurs, and in all rounds of extension the ketoreductase and dehydratase are active. The enoyl reductase and C-MeT of pks1 are not active in the final round of extension. The acetyltransferase M4 appears to have a broad substrate selectivity for its acyl CoA substrate, allowing the in vitro synthesis of novel squalestatins. The biosynthesis of SQS1 requires several oxidative steps likely performed by oxidoreductases M1, R1 and R2. Finally, in support of the identification of the cluster as being responsible for SQS1 production, the cluster contains a gene encoding a putative squalene synthase (SS) R6, suggesting a likely mechanism for self-resistance. This Phoma sp. (strain ATCC 20986 / MF5453) protein is Probable carboxylesterase M8.